Reading from the N-terminus, the 307-residue chain is Aspartate carbamoyltransferase catalytic subunit (307 aa).

Carbamoyl phosphate-binding residues include R59 and T60. K87 contributes to the L-aspartate binding site. R109, H137, and Q140 together coordinate carbamoyl phosphate. L-aspartate contacts are provided by R173 and R223. Carbamoyl phosphate-binding residues include G266 and P267.

Belongs to the aspartate/ornithine carbamoyltransferase superfamily. ATCase family. In terms of assembly, heterododecamer (2C3:3R2) of six catalytic PyrB chains organized as two trimers (C3), and six regulatory PyrI chains organized as three dimers (R2).

The catalysed reaction is carbamoyl phosphate + L-aspartate = N-carbamoyl-L-aspartate + phosphate + H(+). The protein operates within pyrimidine metabolism; UMP biosynthesis via de novo pathway; (S)-dihydroorotate from bicarbonate: step 2/3. Functionally, catalyzes the condensation of carbamoyl phosphate and aspartate to form carbamoyl aspartate and inorganic phosphate, the committed step in the de novo pyrimidine nucleotide biosynthesis pathway. The chain is Aspartate carbamoyltransferase catalytic subunit from Helicobacter pylori (strain G27).